The primary structure comprises 499 residues: UDP-N-acetylmuramoylalanine--D-glutamate ligase (499 aa).

Residue 128 to 134 (GTNGKTT) coordinates ATP.

The protein belongs to the MurCDEF family.

It is found in the cytoplasm. It catalyses the reaction UDP-N-acetyl-alpha-D-muramoyl-L-alanine + D-glutamate + ATP = UDP-N-acetyl-alpha-D-muramoyl-L-alanyl-D-glutamate + ADP + phosphate + H(+). It functions in the pathway cell wall biogenesis; peptidoglycan biosynthesis. In terms of biological role, cell wall formation. Catalyzes the addition of glutamate to the nucleotide precursor UDP-N-acetylmuramoyl-L-alanine (UMA). The sequence is that of UDP-N-acetylmuramoylalanine--D-glutamate ligase from Rhodococcus jostii (strain RHA1).